The sequence spans 320 residues: Protein HEXIM1 (320 aa).

Residues 1 to 124 are disordered; the sequence is MAEPLLSEFQ…RRRPSKKKRL (124 aa). Residues 9-19 are compositionally biased toward polar residues; it reads FQHQPQTSNCT. Basic and acidic residues predominate over residues 24–47; sequence VHEERNPDRPPGAEERVPEEDSRW. Ser-98 carries the post-translational modification Phosphoserine. Positions 109–124 are enriched in basic residues; that stretch reads VGKKKHRRRPSKKKRL. The basic region; mediates nuclear localization and interaction with 7SK snRNA and NR3C1 stretch occupies residues 111–138; that stretch reads KKKHRRRPSKKKRLWKPYYTLTWEEKKK. Residues 163 to 166 are interaction with P-TEFb; sequence PYNT. Residues 171–211 form an autoinhibitory acidic region; in absence of 7SK snRNA interacts with the basic region preventing interaction with P-TEFb and modulating subcellular localization region; sequence MDDHDQEEPDLKTGLYPKRAAAKSDDTSDEDFMEEAGEEDG. The segment at 174-223 is disordered; the sequence is HDQEEPDLKTGLYPKRAAAKSDDTSDEDFMEEAGEEDGGSDGMGGDGSEF. Residue Ser-194 is modified to Phosphoserine. Thr-197 is subject to Phosphothreonine. Acidic residues predominate over residues 197–212; that stretch reads TSDEDFMEEAGEEDGG. A phosphoserine mark is found at Ser-198, Ser-213, and Ser-221. Positions 244–310 form a coiled coil; it reads SKQELIKEYL…LTENELHRQQ (67 aa). The mediates interaction with CCNT1 stretch occupies residues 247–275; it reads ELIKEYLELEKCLSRMEDENNRLRLESQR. The segment at 271-316 is required for inhibition of ESR1-dependent transcription; sequence LESQRLDGDDARVRELELELDRLRAENLQLLTENELHRQQERAPLS.

The protein belongs to the HEXIM family. In terms of assembly, homooligomer and heterooligomer with HEXIM2; probably dimeric. Core component of the 7SK RNP complex, at least composed of 7SK RNA, LARP7, MEPCE, HEXIM1 (or HEXIM2) and P-TEFb (composed of CDK9 and CCNT1/cyclin-T1). Interacts with the N-CoR complex through NCOR1. Interacts with ESR1 and NR3C1. May interact with NF-kappa-B through RELA. Interacts with CCNT2; mediates formation of a tripartite complex with KPNA2. Part of the HDP-RNP complex composed of at least HEXIM1, PRKDC, XRCC5, XRCC6, paraspeckle proteins (SFPQ, NONO, PSPC1, RBM14, and MATR3) and NEAT1 non-coding RNA.

It is found in the nucleus. The protein localises to the cytoplasm. In terms of biological role, transcriptional regulator which functions as a general RNA polymerase II transcription inhibitor. Core component of the 7SK RNP complex: in cooperation with 7SK snRNA sequesters P-TEFb in a large inactive 7SK snRNP complex preventing RNA polymerase II phosphorylation and subsequent transcriptional elongation. May also regulate NF-kappa-B, ESR1, NR3C1 and CIITA-dependent transcriptional activity. Plays a role in the regulation of DNA virus-mediated innate immune response by assembling into the HDP-RNP complex, a complex that serves as a platform for IRF3 phosphorylation and subsequent innate immune response activation through the cGAS-STING pathway. This Bos taurus (Bovine) protein is Protein HEXIM1 (HEXIM1).